Here is a 99-residue protein sequence, read N- to C-terminus: MAAAAASRGIGAKLGLREIRIHLCQRSPGSRGVRDFIEKRYVELKKANSDLPILIRECSDVQPKLWARYAFGQETNVPLNNFSADQVTRALENVLSGKA.

Ala2 carries the post-translational modification N-acetylalanine. Residues Cys24 and Cys58 are joined by a disulfide bond. At Lys64 the chain carries N6-acetyllysine; alternate. Lys64 carries the post-translational modification N6-succinyllysine; alternate.

It belongs to the complex I NDUFA2 subunit family. As to quaternary structure, complex I is composed of 45 different subunits.

The protein resides in the mitochondrion inner membrane. Accessory subunit of the mitochondrial membrane respiratory chain NADH dehydrogenase (Complex I), that is believed not to be involved in catalysis. Complex I functions in the transfer of electrons from NADH to the respiratory chain. The immediate electron acceptor for the enzyme is believed to be ubiquinone. This chain is NADH dehydrogenase [ubiquinone] 1 alpha subcomplex subunit 2 (NDUFA2), found in Gorilla gorilla gorilla (Western lowland gorilla).